The primary structure comprises 446 residues: MKAAVEKLDKNQVLLEVEVEAPRVQKAIDQAYRRLVKQVNIPGFRKGKAPRFILEQYIGKEPIYNEAAEIVIPPAYEEAVAEHQLEPIDRPEVEIVKVEDGEPLVFKARVEVKPEVQLGPYTGLEVERQEVEVTEADIDAYLKRLQERYAELEVIEDEPAAAGDIVTIDFKGTVDGQPYPGMEGNNYPLELGSGTFITGFEEQLVGARVNEERTVNVTFPSDYHEKDLAGKEAVFQVTVRGIKRKKLAPLDDEFAKDVSECETLADLRQDIRRRLEESQKQRVEAAVRQAVVEKAVAAATVELPEVMVERRIDARIRELERNLQAQKMTLEEFLKNTDKTIGDLEKEFRPGAERDVKTELVLEAIAKAENIQPSQEEIDAEIERMARIFRQDPDTVRKNLGDLSVLKYDIMIKKTIDFLVEHSKPVPPREQGAAGETAETAEATPA.

One can recognise a PPIase FKBP-type domain in the interval 163-248 (GDIVTIDFKG…VRGIKRKKLA (86 aa)). Residues 423 to 446 (SKPVPPREQGAAGETAETAEATPA) are disordered. Residues 432 to 446 (GAAGETAETAEATPA) show a composition bias toward low complexity.

The protein belongs to the FKBP-type PPIase family. Tig subfamily.

The protein resides in the cytoplasm. The catalysed reaction is [protein]-peptidylproline (omega=180) = [protein]-peptidylproline (omega=0). In terms of biological role, involved in protein export. Acts as a chaperone by maintaining the newly synthesized protein in an open conformation. Functions as a peptidyl-prolyl cis-trans isomerase. This Moorella thermoacetica (strain ATCC 39073 / JCM 9320) protein is Trigger factor.